The chain runs to 20 residues: Probable cinnamyl alcohol dehydrogenase 1 (20 aa).

The protein belongs to the zinc-containing alcohol dehydrogenase family. Requires Zn(2+) as cofactor.

The catalysed reaction is (E)-cinnamyl alcohol + NADP(+) = (E)-cinnamaldehyde + NADPH + H(+). The enzyme catalyses (E)-coniferol + NADP(+) = (E)-coniferaldehyde + NADPH + H(+). It catalyses the reaction (E)-sinapyl alcohol + NADP(+) = (E)-sinapaldehyde + NADPH + H(+). It carries out the reaction (E)-4-coumaroyl alcohol + NADP(+) = (E)-4-coumaraldehyde + NADPH + H(+). The catalysed reaction is (E)-caffeyl alcohol + NADP(+) = (E)-caffeyl aldehyde + NADPH + H(+). The protein operates within aromatic compound metabolism; phenylpropanoid biosynthesis. Involved in lignin biosynthesis. Catalyzes the final step specific for the production of lignin monomers, like coniferyl alcohol, sinapyl alcohol and 4-coumaryl alcohol. In Pseudotsuga menziesii (Douglas-fir), this protein is Probable cinnamyl alcohol dehydrogenase 1.